A 171-amino-acid chain; its full sequence is Ribosome maturation factor RimP (171 aa).

This sequence belongs to the RimP family.

It is found in the cytoplasm. Functionally, required for maturation of 30S ribosomal subunits. This is Ribosome maturation factor RimP from Anaeromyxobacter sp. (strain Fw109-5).